We begin with the raw amino-acid sequence, 246 residues long: UDP-N-acetyl-D-mannosaminuronic acid transferase (246 aa).

This sequence belongs to the glycosyltransferase 26 family.

It catalyses the reaction UDP-N-acetyl-alpha-D-mannosaminouronate + N-acetyl-alpha-D-glucosaminyl-di-trans,octa-cis-undecaprenyl diphosphate = beta-D-ManNAcA-(1-&gt;4)-alpha-D-GlcNAc-di-trans,octa-cis-undecaprenyl diphosphate + UDP + H(+). The protein operates within bacterial outer membrane biogenesis; enterobacterial common antigen biosynthesis. Its function is as follows. Catalyzes the synthesis of Und-PP-GlcNAc-ManNAcA (Lipid II), the second lipid-linked intermediate involved in enterobacterial common antigen (ECA) synthesis. In Yersinia pestis bv. Antiqua (strain Antiqua), this protein is UDP-N-acetyl-D-mannosaminuronic acid transferase.